The chain runs to 285 residues: uncharacterized protein (285 aa).

Residues 92 to 199 (TLLLADVEES…PTINRTARLR (108 aa)) enclose the Guanylate cyclase domain.

Belongs to the adenylyl cyclase class-4/guanylyl cyclase family.

This is an uncharacterized protein from Mycobacterium tuberculosis (strain ATCC 25618 / H37Rv).